Consider the following 253-residue polypeptide: tRNA pseudouridine synthase A (253 aa).

The active-site Nucleophile is Asp-51. Tyr-110 is a substrate binding site.

The protein belongs to the tRNA pseudouridine synthase TruA family. As to quaternary structure, homodimer.

It catalyses the reaction uridine(38/39/40) in tRNA = pseudouridine(38/39/40) in tRNA. Its function is as follows. Formation of pseudouridine at positions 38, 39 and 40 in the anticodon stem and loop of transfer RNAs. The polypeptide is tRNA pseudouridine synthase A (Wolinella succinogenes (strain ATCC 29543 / DSM 1740 / CCUG 13145 / JCM 31913 / LMG 7466 / NCTC 11488 / FDC 602W) (Vibrio succinogenes)).